Reading from the N-terminus, the 130-residue chain is Mitochondrial pyruvate carrier 1 (130 aa).

Helical transmembrane passes span 23–45 and 55–77; these read LKYI…IAAI and ISGP…ALSV.

The protein belongs to the mitochondrial pyruvate carrier (MPC) (TC 2.A.105) family. As to quaternary structure, the functional 150 kDa pyruvate import complex is a heteromer of MPC1 and either MPC2 or MPC3.

The protein localises to the mitochondrion. The protein resides in the mitochondrion inner membrane. Its function is as follows. Mediates the uptake of pyruvate into mitochondria. The sequence is that of Mitochondrial pyruvate carrier 1 from Saccharomyces cerevisiae (strain ATCC 204508 / S288c) (Baker's yeast).